Here is a 182-residue protein sequence, read N- to C-terminus: Isopentenyl-diphosphate Delta-isomerase (182 aa).

Residues H25 and H32 each contribute to the Mn(2+) site. The 135-residue stretch at 30–164 folds into the Nudix hydrolase domain; sequence PLHLAFSCWL…PWAFSPWMVM (135 aa). C67 is a catalytic residue. H69 is a Mn(2+) binding site. E87 contributes to the Mg(2+) binding site. Mn(2+)-binding residues include E114 and E116. E116 is a catalytic residue.

Belongs to the IPP isomerase type 1 family. Homodimer. The cofactor is Mg(2+). Mn(2+) serves as cofactor.

It localises to the cytoplasm. The catalysed reaction is isopentenyl diphosphate = dimethylallyl diphosphate. It participates in isoprenoid biosynthesis; dimethylallyl diphosphate biosynthesis; dimethylallyl diphosphate from isopentenyl diphosphate: step 1/1. In terms of biological role, catalyzes the 1,3-allylic rearrangement of the homoallylic substrate isopentenyl (IPP) to its highly electrophilic allylic isomer, dimethylallyl diphosphate (DMAPP). The sequence is that of Isopentenyl-diphosphate Delta-isomerase from Salmonella arizonae (strain ATCC BAA-731 / CDC346-86 / RSK2980).